The sequence spans 294 residues: Elongation factor Ts (294 aa).

The segment at 80–83 is involved in Mg(2+) ion dislocation from EF-Tu; the sequence is TDFV.

Belongs to the EF-Ts family.

It is found in the cytoplasm. Functionally, associates with the EF-Tu.GDP complex and induces the exchange of GDP to GTP. It remains bound to the aminoacyl-tRNA.EF-Tu.GTP complex up to the GTP hydrolysis stage on the ribosome. This is Elongation factor Ts from Listeria monocytogenes serotype 4b (strain CLIP80459).